Reading from the N-terminus, the 1257-residue chain is Putative structural protein ORF146 (1257 aa).

This sequence belongs to the ascovirus HvAV ORF146 family.

The protein resides in the virion. In Noctuidae (owlet moths), this protein is Putative structural protein ORF146.